The primary structure comprises 399 residues: Elongation factor Tu (399 aa).

One can recognise a tr-type G domain in the interval Lys10–Val209. Residues Gly19–Thr26 are G1. Residue Gly19–Thr26 coordinates GTP. Thr26 contacts Mg(2+). The interval Gly60–Ala64 is G2. Residues Asp81–Gly84 are G3. GTP is bound by residues Asp81–His85 and Asn136–Asp139. The segment at Asn136 to Asp139 is G4. Positions Ser174–Leu176 are G5.

It belongs to the TRAFAC class translation factor GTPase superfamily. Classic translation factor GTPase family. EF-Tu/EF-1A subfamily. In terms of assembly, monomer.

The protein resides in the cytoplasm. It catalyses the reaction GTP + H2O = GDP + phosphate + H(+). Functionally, GTP hydrolase that promotes the GTP-dependent binding of aminoacyl-tRNA to the A-site of ribosomes during protein biosynthesis. The protein is Elongation factor Tu of Campylobacter concisus (strain 13826).